We begin with the raw amino-acid sequence, 339 residues long: MVKKNDLFIDVSSHNGYDITGILEQMGTTNTIVKISESTTYLNPCLSAQVEQSTPIGFYHFARFGGDVAEAEREAQFFLDNVPTQVKYLVLDYEDDPSGNAQANTNACLRFMQMIADAGYTPIYYSYKPFTLDNVDYQQILAQFPNSLWIAGYGLNDGNADFEYFPSMDGIRWWQYSSNPFDKNIVLLDDEEDEKPKTAGTWKQDSKGWWFRRNNGSFPYNKWEKIGGVWYYFDSKGYCLTSEWLKDNEKWYYLKDNGAMVTGWVLVGSEWYYMDDSGAMVTGWVKYKNNWYYMTNERGNMVSNEFIKSGKGWYFMNTNGELADNPSFTKEPDGLITVA.

Residues 5-201 (NDLFIDVSSH…EDEKPKTAGT (197 aa)) form the Ch-type lysozyme domain. Catalysis depends on residues Asp-10, Asp-92, and Glu-94. 6 Cell wall-binding repeats span residues 200–219 (GTWK…GSFP), 220–239 (YNKW…KGYC), 241–260 (TSEW…NGAM), 261–280 (VTGW…SGAM), 281–300 (VTGW…ERGN), and 303–322 (SNEF…NGEL).

The protein belongs to the glycosyl hydrolase 25 family.

The catalysed reaction is Hydrolysis of (1-&gt;4)-beta-linkages between N-acetylmuramic acid and N-acetyl-D-glucosamine residues in a peptidoglycan and between N-acetyl-D-glucosamine residues in chitodextrins.. In terms of biological role, responsible for the separation of the host daughter cells at the end of cell division and participates in the liberation of progeny bacteriophage into the medium. Strictly depends on the presence of choline-containing cell walls for activity. The sequence is that of Lysozyme (CPL9) from Streptococcus pneumoniae (Bacteriophage Cp-9).